We begin with the raw amino-acid sequence, 155 residues long: Deoxyuridine 5'-triphosphate nucleotidohydrolase (155 aa).

Residues 74–76 (RSG), Asn-87, and 91–93 (TID) each bind substrate.

The protein belongs to the dUTPase family. Mg(2+) serves as cofactor.

The catalysed reaction is dUTP + H2O = dUMP + diphosphate + H(+). It functions in the pathway pyrimidine metabolism; dUMP biosynthesis; dUMP from dCTP (dUTP route): step 2/2. Its function is as follows. This enzyme is involved in nucleotide metabolism: it produces dUMP, the immediate precursor of thymidine nucleotides and it decreases the intracellular concentration of dUTP so that uracil cannot be incorporated into DNA. The polypeptide is Deoxyuridine 5'-triphosphate nucleotidohydrolase (Cereibacter sphaeroides (strain ATCC 17023 / DSM 158 / JCM 6121 / CCUG 31486 / LMG 2827 / NBRC 12203 / NCIMB 8253 / ATH 2.4.1.) (Rhodobacter sphaeroides)).